Consider the following 283-residue polypeptide: tRNA pseudouridine synthase A (283 aa).

D52 serves as the catalytic Nucleophile. Residue Y148 coordinates substrate.

It belongs to the tRNA pseudouridine synthase TruA family. As to quaternary structure, homodimer.

The catalysed reaction is uridine(38/39/40) in tRNA = pseudouridine(38/39/40) in tRNA. In terms of biological role, formation of pseudouridine at positions 38, 39 and 40 in the anticodon stem and loop of transfer RNAs. This Orientia tsutsugamushi (strain Ikeda) (Rickettsia tsutsugamushi) protein is tRNA pseudouridine synthase A.